We begin with the raw amino-acid sequence, 277 residues long: MKQYLELLNDVVTNGLTKGDRTGTGTKAVFARQYRHNLADGFPLLTTKKLHFKSIANELIWMLSGNTNIKWLNENGVKIWDEWATEDGDLGPVYGEQWTAWPTKDGGTINQIDYMVHTLKTNPNSRRILFHGWNVEYLPDETKSPQENARNGKQALPPCHLLYQAFVHDGHLSMQLYIRSSDVFLGLPYNTAALALLTHMLAQQCDLIPHEIIVTTGDTHAYSNHMEQIRTQLARTPKKLPELVIKRKPASIYDYKFEDFEIVGYDADPSIKADVAI.

DUMP is bound at residue arginine 21. Histidine 51 lines the (6R)-5,10-methylene-5,6,7,8-tetrahydrofolate pocket. 126 to 127 contributes to the dUMP binding site; the sequence is RR. Cysteine 159 (nucleophile) is an active-site residue. Residues 179–182, asparagine 190, and 220–222 contribute to the dUMP site; these read RSSD and HAY. Aspartate 182 contacts (6R)-5,10-methylene-5,6,7,8-tetrahydrofolate. A (6R)-5,10-methylene-5,6,7,8-tetrahydrofolate-binding site is contributed by alanine 276.

This sequence belongs to the thymidylate synthase family. Bacterial-type ThyA subfamily. As to quaternary structure, homodimer.

It localises to the cytoplasm. It carries out the reaction dUMP + (6R)-5,10-methylene-5,6,7,8-tetrahydrofolate = 7,8-dihydrofolate + dTMP. It functions in the pathway pyrimidine metabolism; dTTP biosynthesis. Its function is as follows. Catalyzes the reductive methylation of 2'-deoxyuridine-5'-monophosphate (dUMP) to 2'-deoxythymidine-5'-monophosphate (dTMP) while utilizing 5,10-methylenetetrahydrofolate (mTHF) as the methyl donor and reductant in the reaction, yielding dihydrofolate (DHF) as a by-product. This enzymatic reaction provides an intracellular de novo source of dTMP, an essential precursor for DNA biosynthesis. The protein is Thymidylate synthase of Pseudomonas fluorescens (strain SBW25).